The following is a 188-amino-acid chain: dCTP deaminase (188 aa).

DCTP is bound by residues 111-116 (KSTYAR), 135-137 (TLE), Q156, Y170, and Q180. E137 (proton donor/acceptor) is an active-site residue.

This sequence belongs to the dCTP deaminase family. Homotrimer.

It carries out the reaction dCTP + H2O + H(+) = dUTP + NH4(+). It functions in the pathway pyrimidine metabolism; dUMP biosynthesis; dUMP from dCTP (dUTP route): step 1/2. Its function is as follows. Catalyzes the deamination of dCTP to dUTP. The sequence is that of dCTP deaminase from Neisseria meningitidis serogroup C / serotype 2a (strain ATCC 700532 / DSM 15464 / FAM18).